An 87-amino-acid polypeptide reads, in one-letter code: Translation initiation factor IF-1 (87 aa).

In terms of domain architecture, S1-like spans 16 to 87 (LSKEDVIEME…TKGRISYRHK (72 aa)).

This sequence belongs to the IF-1 family. Component of the 30S ribosomal translation pre-initiation complex which assembles on the 30S ribosome in the order IF-2 and IF-3, IF-1 and N-formylmethionyl-tRNA(fMet); mRNA recruitment can occur at any time during PIC assembly.

The protein resides in the cytoplasm. Functionally, one of the essential components for the initiation of protein synthesis. Stabilizes the binding of IF-2 and IF-3 on the 30S subunit to which N-formylmethionyl-tRNA(fMet) subsequently binds. Helps modulate mRNA selection, yielding the 30S pre-initiation complex (PIC). Upon addition of the 50S ribosomal subunit IF-1, IF-2 and IF-3 are released leaving the mature 70S translation initiation complex. The chain is Translation initiation factor IF-1 from Magnetococcus marinus (strain ATCC BAA-1437 / JCM 17883 / MC-1).